A 156-amino-acid polypeptide reads, in one-letter code: Cyclin-dependent kinase inhibitor 2A (156 aa).

Met-1 bears the N-acetylmethionine mark. Ser-7 and Ser-8 each carry phosphoserine. 4 ANK repeats span residues 11–40 (PSADWLATAAARGRVEEVRALLEAGALPNA), 44–72 (YGRRPIQVMMMGSARVAELLLLHGAEPNC), 77–106 (TLTRPVHDAAREGFLDTLVVLHRAGARLDV), and 110–139 (WGRLPVDLAEELGHRDVARYLRAAAGGTRG). Residues Ser-140 and Ser-152 each carry the phosphoserine modification.

Belongs to the CDKN2 cyclin-dependent kinase inhibitor family. As to quaternary structure, heterodimer with CDK4 or CDK6. Predominant p16 complexes contained CDK6. Interacts with CDK4 (both 'T-172'-phosphorylated and non-phosphorylated forms); the interaction inhibits cyclin D-CDK4 kinase activity. Interacts with ISCO2. In terms of processing, phosphorylation seems to increase interaction with CDK4. In terms of tissue distribution, widely expressed but not detected in brain or skeletal muscle. Isoform 3 is pancreas-specific.

It is found in the cytoplasm. Its subcellular location is the nucleus. Its function is as follows. Acts as a negative regulator of the proliferation of normal cells by interacting strongly with CDK4 and CDK6. This inhibits their ability to interact with cyclins D and to phosphorylate the retinoblastoma protein. This is Cyclin-dependent kinase inhibitor 2A from Homo sapiens (Human).